Consider the following 366-residue polypeptide: MDSLQPLFEQLFGSEWGGPLFLLIKNLLLILAIVIPLLLAVAYLTFAERKIIAYMQVRVGPNRVTFFDIPWLRGWGQPIADAVKAIMKEIIIPTGANKFLFLLAPVLAIGPALAAWAVVPFSPELVLADINAGLLYILAMTSLGVYGVIIAGWASNSKYAFLGAMRSAAQVVSYELAMGFALVCVLMMSSSLNLGDIVAGQQGGSFLNWYLIPLFPMFLVYFISGVAETNRAPFDVAEGESEIVAGFHVDYSGMAFTVFFLAEYANMILVATLASIMFLGGWLPPVDIAPFNLIPGMVWLLLKIAFMLFFFLWFRATFPRYRYDQIMRLGWKVFIPLTLVWIVVLGMVMQLPEVVRQSFPLNLWFN.

8 helical membrane-spanning segments follow: residues 27-47 (LLLILAIVIPLLLAVAYLTFA), 99-119 (FLFLLAPVLAIGPALAAWAVV), 134-154 (LLYILAMTSLGVYGVIIAGWA), 168-188 (AAQVVSYELAMGFALVCVLMM), 206-226 (FLNWYLIPLFPMFLVYFISGV), 268-288 (ILVATLASIMFLGGWLPPVDI), 294-314 (IPGMVWLLLKIAFMLFFFLWF), and 329-349 (LGWKVFIPLTLVWIVVLGMVM).

The protein belongs to the complex I subunit 1 family. In terms of assembly, NDH-1 is composed of 14 different subunits. Subunits NuoA, H, J, K, L, M, N constitute the membrane sector of the complex.

The protein resides in the cell inner membrane. The catalysed reaction is a quinone + NADH + 5 H(+)(in) = a quinol + NAD(+) + 4 H(+)(out). NDH-1 shuttles electrons from NADH, via FMN and iron-sulfur (Fe-S) centers, to quinones in the respiratory chain. The immediate electron acceptor for the enzyme in this species is believed to be ubiquinone. Couples the redox reaction to proton translocation (for every two electrons transferred, four hydrogen ions are translocated across the cytoplasmic membrane), and thus conserves the redox energy in a proton gradient. This subunit may bind ubiquinone. The chain is NADH-quinone oxidoreductase subunit H from Nitrosomonas europaea (strain ATCC 19718 / CIP 103999 / KCTC 2705 / NBRC 14298).